Reading from the N-terminus, the 924-residue chain is Translation initiation factor IF-2 (924 aa).

A disordered region spans residues 118-325 (PSTAHREELA…QAPVVGGVRL (208 aa)). Composition is skewed to pro residues over residues 150 to 173 (APHPGHPGMPTGPHPGPAPKPGGR) and 192 to 201 (IPRPPAPRPS). A compositionally biased stretch (low complexity) spans 202–212 (ASPSSMSPRPG). Over residues 229–295 (RPGGGRPGAP…GAAGAFGRPG (67 aa)) the composition is skewed to gly residues. Residues 299–308 (RRGRKSKRQK) are compositionally biased toward basic residues. The tr-type G domain occupies 420–591 (VRPPVVTVMG…AVLLTADAAL (172 aa)). The tract at residues 429–436 (GHVDHGKT) is G1. 429-436 (GHVDHGKT) contacts GTP. A G2 region spans residues 454-458 (GITQH). A G3 region spans residues 479-482 (DTPG). GTP is bound by residues 479–483 (DTPGH) and 533–536 (NKID). Residues 533 to 536 (NKID) form a G4 region. A G5 region spans residues 569-571 (SAK).

Belongs to the TRAFAC class translation factor GTPase superfamily. Classic translation factor GTPase family. IF-2 subfamily.

The protein resides in the cytoplasm. In terms of biological role, one of the essential components for the initiation of protein synthesis. Protects formylmethionyl-tRNA from spontaneous hydrolysis and promotes its binding to the 30S ribosomal subunits. Also involved in the hydrolysis of GTP during the formation of the 70S ribosomal complex. In Mycobacterium leprae (strain Br4923), this protein is Translation initiation factor IF-2.